Reading from the N-terminus, the 296-residue chain is Low affinity immunoglobulin gamma Fc region receptor II (296 aa).

The signal sequence occupies residues 1-42 (MGIPSFLAFPAARRNRAHCTPWHPWGHMLLWTALLFLAPVSG). Residues 43–225 (KPDLPKAVVT…SSSSGPSSMT (183 aa)) lie on the Extracellular side of the membrane. Ig-like C2-type domains are found at residues 47–129 (PKAV…DVIS) and 130–212 (DWLL…VNIT). Cystine bridges form between cysteine 70–cysteine 112 and cysteine 151–cysteine 195. N-linked (GlcNAc...) asparagine glycans are attached at residues asparagine 79, asparagine 86, asparagine 105, asparagine 179, asparagine 186, and asparagine 210. Residues 226 to 246 (AVAIGTCFAAVAIVAAIITWF) form a helical membrane-spanning segment. The Cytoplasmic portion of the chain corresponds to 247 to 296 (RLRRKPISAGLTDAENDAARTEAENTVTYSLLSHPDVAEEDSESDYQKRL). Residues 273–278 (VTYSLL) carry the ITIM motif motif. Tyrosine 275 bears the Phosphotyrosine; by SRC-type Tyr-kinases mark. Phosphoserine is present on serine 288. A Phosphotyrosine modification is found at tyrosine 292.

As to quaternary structure, interacts with FGR and LYN. Post-translationally, phosphorylated by SRC-type Tyr-kinases such as LYN, BLK, FYN and SYK. Higher expression is found in macrophages than in neutrophils.

The protein localises to the cell membrane. Functionally, binds to the Fc region of immunoglobulins gamma. Low affinity receptor. This Bos taurus (Bovine) protein is Low affinity immunoglobulin gamma Fc region receptor II (FCGR2).